We begin with the raw amino-acid sequence, 124 residues long: Small ribosomal subunit protein uS12 (124 aa).

The residue at position 89 (D89) is a 3-methylthioaspartic acid.

Belongs to the universal ribosomal protein uS12 family. As to quaternary structure, part of the 30S ribosomal subunit. Contacts proteins S8 and S17. May interact with IF1 in the 30S initiation complex.

In terms of biological role, with S4 and S5 plays an important role in translational accuracy. Functionally, interacts with and stabilizes bases of the 16S rRNA that are involved in tRNA selection in the A site and with the mRNA backbone. Located at the interface of the 30S and 50S subunits, it traverses the body of the 30S subunit contacting proteins on the other side and probably holding the rRNA structure together. The combined cluster of proteins S8, S12 and S17 appears to hold together the shoulder and platform of the 30S subunit. This chain is Small ribosomal subunit protein uS12, found in Pasteurella multocida (strain Pm70).